Consider the following 304-residue polypeptide: GTPase Era (304 aa).

One can recognise an Era-type G domain in the interval tyrosine 11 to glutamate 179. Positions glycine 19–serine 26 are G1. Glycine 19–serine 26 contacts GTP. A G2 region spans residues glutamine 45–histidine 49. The segment at aspartate 66–glycine 69 is G3. Residues aspartate 66–leucine 70 and asparagine 128–aspartate 131 contribute to the GTP site. Positions asparagine 128–aspartate 131 are G4. Residues isoleucine 158–alanine 160 are G5. Residues threonine 210 to alanine 287 form the KH type-2 domain.

The protein belongs to the TRAFAC class TrmE-Era-EngA-EngB-Septin-like GTPase superfamily. Era GTPase family. Monomer.

Its subcellular location is the cytoplasm. It is found in the cell inner membrane. Its function is as follows. An essential GTPase that binds both GDP and GTP, with rapid nucleotide exchange. Plays a role in 16S rRNA processing and 30S ribosomal subunit biogenesis and possibly also in cell cycle regulation and energy metabolism. In Haemophilus ducreyi (strain 35000HP / ATCC 700724), this protein is GTPase Era.